The chain runs to 201 residues: Recombination protein RecR (201 aa).

The C4-type zinc finger occupies 57 to 72 (CRSCRTFTEEDECNIC). The Toprim domain maps to 81–176 (GQLCVVEMPE…KVTRIAHGIP (96 aa)).

This sequence belongs to the RecR family.

Its function is as follows. May play a role in DNA repair. It seems to be involved in an RecBC-independent recombinational process of DNA repair. It may act with RecF and RecO. The sequence is that of Recombination protein RecR from Actinobacillus pleuropneumoniae serotype 5b (strain L20).